The sequence spans 1181 residues: WD repeat-containing protein 35 (1181 aa).

5 WD repeats span residues 12–51, 69–108, 113–152, 154–193, and 502–539; these read PNNVKLKCISWNKDQGFIACGGEDGLLKVLRLETQTDDSK, GHSGAVQVVTWNEQYQKLTTSDQNGLIIVWMLYKGSWYEE, RNKSVVRSMSWNADGQKICIVYEDGAVIVGSVDGNRIWGK, LKGIQLCHVTWSADSKILLFGMANGEIHIYDNQGNFIMKM, and GTRDPICAITASDKTLIVGRESGVIQRYSFPNVALIQK.

Component of the IFT complex A (IFT-A) complex. IFT-A complex is divided into a core subcomplex composed of IFT122:IFT140:WDR19 which is associated with TULP3 and a peripheral subcomplex composed of IFT43:WDR35:TTC21B. Interacts directy with IFT122, ITF43 and TTC21B. Interacts with IFT43. Interacts with CFAP61.

It localises to the cytoplasm. The protein localises to the cytoskeleton. Its subcellular location is the microtubule organizing center. It is found in the centrosome. The protein resides in the cilium axoneme. It localises to the cilium basal body. Its function is as follows. As a component of the IFT complex A (IFT-A), a complex required for retrograde ciliary transport and entry into cilia of G protein-coupled receptors (GPCRs), it is involved in ciliogenesis and ciliary protein trafficking. May promote CASP3 activation and TNF-stimulated apoptosis. This Mus musculus (Mouse) protein is WD repeat-containing protein 35.